Consider the following 307-residue polypeptide: Elongation factor Ts (307 aa).

The segment at 79 to 82 (TDFV) is involved in Mg(2+) ion dislocation from EF-Tu.

The protein belongs to the EF-Ts family.

The protein localises to the cytoplasm. In terms of biological role, associates with the EF-Tu.GDP complex and induces the exchange of GDP to GTP. It remains bound to the aminoacyl-tRNA.EF-Tu.GTP complex up to the GTP hydrolysis stage on the ribosome. The protein is Elongation factor Ts of Sinorhizobium medicae (strain WSM419) (Ensifer medicae).